The primary structure comprises 429 residues: Phosphoribosylamine--glycine ligase (429 aa).

Residues 108-315 enclose the ATP-grasp domain; the sequence is KDFLARHRIP…LVLLVEAALA (208 aa). Residue 134 to 195 coordinates ATP; the sequence is LHEQGAPIVI…EEFLDGEEAS (62 aa). Glu-285 and Asn-287 together coordinate Mg(2+).

It belongs to the GARS family. Mg(2+) is required as a cofactor. The cofactor is Mn(2+).

It catalyses the reaction 5-phospho-beta-D-ribosylamine + glycine + ATP = N(1)-(5-phospho-beta-D-ribosyl)glycinamide + ADP + phosphate + H(+). Its pathway is purine metabolism; IMP biosynthesis via de novo pathway; N(1)-(5-phospho-D-ribosyl)glycinamide from 5-phospho-alpha-D-ribose 1-diphosphate: step 2/2. The chain is Phosphoribosylamine--glycine ligase from Pseudomonas aeruginosa (strain ATCC 15692 / DSM 22644 / CIP 104116 / JCM 14847 / LMG 12228 / 1C / PRS 101 / PAO1).